Reading from the N-terminus, the 716-residue chain is Antibacterial effector protein Tle3 (716 aa).

The interval 68-87 (PTLPGGQANPGYLTPAGYSL) is disordered.

Interacts in the cytoplasm with the adapter protein Tla3. Interacts in the periplasm with the immunity protein Tli3.

It is found in the secreted. The protein resides in the host periplasm. Neutralized by the immunity protein Tli3 in the periplasm of P.aeruginosa cells. Functionally, antibacterial effector. Is toxic once delivered in the periplasm of prey bacteria. The chain is Antibacterial effector protein Tle3 from Pseudomonas aeruginosa (strain ATCC 15692 / DSM 22644 / CIP 104116 / JCM 14847 / LMG 12228 / 1C / PRS 101 / PAO1).